The following is a 320-amino-acid chain: ATP-dependent 6-phosphofructokinase (320 aa).

Position 12 (Gly-12) interacts with ATP. Residues 22 to 26 (RGVVR) and 55 to 60 (RYSVSD) contribute to the ADP site. Residues 73-74 (RF) and 103-106 (GDGS) each bind ATP. Asp-104 provides a ligand contact to Mg(2+). Residue 126–128 (TID) participates in substrate binding. Residue Asp-128 is the Proton acceptor of the active site. Arg-155 is a binding site for ADP. Substrate-binding positions include Arg-163 and 170–172 (MGR). Residues 186-188 (GCE), Lys-212, and 214-216 (KKH) contribute to the ADP site. Substrate is bound by residues Glu-223, Arg-244, and 250–253 (HIQR).

This sequence belongs to the phosphofructokinase type A (PFKA) family. ATP-dependent PFK group I subfamily. Prokaryotic clade 'B1' sub-subfamily. As to quaternary structure, homotetramer. The cofactor is Mg(2+).

The protein localises to the cytoplasm. The catalysed reaction is beta-D-fructose 6-phosphate + ATP = beta-D-fructose 1,6-bisphosphate + ADP + H(+). It participates in carbohydrate degradation; glycolysis; D-glyceraldehyde 3-phosphate and glycerone phosphate from D-glucose: step 3/4. With respect to regulation, allosterically activated by ADP and other diphosphonucleosides, and allosterically inhibited by phosphoenolpyruvate. In terms of biological role, catalyzes the phosphorylation of D-fructose 6-phosphate to fructose 1,6-bisphosphate by ATP, the first committing step of glycolysis. This chain is ATP-dependent 6-phosphofructokinase, found in Salmonella gallinarum (strain 287/91 / NCTC 13346).